We begin with the raw amino-acid sequence, 317 residues long: Homoserine O-succinyltransferase (317 aa).

Residue Cys142 is the Acyl-thioester intermediate of the active site. 2 residues coordinate substrate: Lys163 and Ser192. His235 serves as the catalytic Proton acceptor. Glu237 is a catalytic residue. Residue Arg249 coordinates substrate.

The protein belongs to the MetA family.

It is found in the cytoplasm. The enzyme catalyses L-homoserine + succinyl-CoA = O-succinyl-L-homoserine + CoA. The protein operates within amino-acid biosynthesis; L-methionine biosynthesis via de novo pathway; O-succinyl-L-homoserine from L-homoserine: step 1/1. Functionally, transfers a succinyl group from succinyl-CoA to L-homoserine, forming succinyl-L-homoserine. The sequence is that of Homoserine O-succinyltransferase from Aeromonas hydrophila subsp. hydrophila (strain ATCC 7966 / DSM 30187 / BCRC 13018 / CCUG 14551 / JCM 1027 / KCTC 2358 / NCIMB 9240 / NCTC 8049).